A 524-amino-acid polypeptide reads, in one-letter code: Importin subunit alpha-1 (524 aa).

The interval 1–42 (MGDEFRPSHEERSKMYKSNVRDQNEMRRKRREDEVQIRKNRR) is disordered. Residues 1–59 (MGDEFRPSHEERSKMYKSNVRDQNEMRRKRREDEVQIRKNRRDEKFERNRQITVQRSLS) enclose the IBB domain.

Belongs to the importin alpha family. Forms a complex with an importin beta subunit. As to expression, adult germline tissues.

Its subcellular location is the cytoplasm. Functionally, binds specifically and directly to substrates containing either a simple or bipartite NLS motif. Promotes docking of import substrates to the nuclear envelope. Seems to act as a cytosolic receptor for both simple and bipartite NLS motifs. In Caenorhabditis elegans, this protein is Importin subunit alpha-1 (ima-1).